Reading from the N-terminus, the 556-residue chain is Probable Xaa-Pro aminopeptidase SS1G_06948 (556 aa).

Positions 305, 316, 460, and 501 each coordinate Mn(2+).

The protein belongs to the peptidase M24B family. It depends on Mn(2+) as a cofactor.

It catalyses the reaction Release of any N-terminal amino acid, including proline, that is linked to proline, even from a dipeptide or tripeptide.. In terms of biological role, catalyzes the removal of a penultimate prolyl residue from the N-termini of peptides. The sequence is that of Probable Xaa-Pro aminopeptidase SS1G_06948 from Sclerotinia sclerotiorum (strain ATCC 18683 / 1980 / Ss-1) (White mold).